A 540-amino-acid chain; its full sequence is Probable ATP-dependent RNA helicase DDX28 (540 aa).

The Mitochondrial targeting signal signature appears at 3 to 18 (LAGPSRLLALAVRLLL). Positions 126-156 (GSFVDLGLEPRVLLALQEAVPEVVQPTSVQS) match the Q motif motif. Residues 159-351 (IPPLLRGRHL…SKVTSPDSLT (193 aa)) form the Helicase ATP-binding domain. Residue 172–179 (AETGSGKT) coordinates ATP. The Nuclear export signal signature appears at 180–191 (LSYLLPLFQRLL). Residues 286–289 (DEVD) carry the DEAD motif. Positions 377 to 536 (KVTELVQILK…GLASSVGDPL (160 aa)) constitute a Helicase C-terminal domain. The Nuclear localization signal motif lies at 520 to 523 (RRRR).

This sequence belongs to the DEAD box helicase family. In terms of assembly, monomer. Found in a complex with GRSF1, DHX30, FASTKD2 and FASTKD5. Associates with the 16S mitochondrial rRNA (16S mt-rRNA) and with the mitochondrial ribosome large subunit (39S).

It localises to the nucleus. Its subcellular location is the mitochondrion. The protein resides in the mitochondrion matrix. It is found in the mitochondrion nucleoid. The enzyme catalyses ATP + H2O = ADP + phosphate + H(+). Its function is as follows. Plays an essential role in facilitating the proper assembly of the mitochondrial large ribosomal subunit and its helicase activity is essential for this function. May be involved in RNA processing or transport. Has RNA and Mg(2+)-dependent ATPase activity. This Mus musculus (Mouse) protein is Probable ATP-dependent RNA helicase DDX28 (Ddx28).